We begin with the raw amino-acid sequence, 111 residues long: TPR repeat-containing protein associated with Hsp90 (111 aa).

At Ser2 the chain carries N-acetylserine. 2 TPR repeats span residues 4–37 (FEKQKEQGNSLFKQGLYREAVHCYDQLITAQPQN) and 39–71 (VGYSNKAMALIKLGEYTQAIQMCQQGLRYTSTA).

As to quaternary structure, component of the R2TP complex composed at least of RVB1, RVB2, TAH1 and PIH1. Also interacts with HSP90.

It localises to the cytoplasm. The protein resides in the nucleus. This chain is TPR repeat-containing protein associated with Hsp90 (TAH1), found in Saccharomyces cerevisiae (strain ATCC 204508 / S288c) (Baker's yeast).